Reading from the N-terminus, the 897-residue chain is MSTPHPAPASAYEPGAIEAAAHAHWTARDAHRVVEDTSRPKFYACSMLPYPSGKLHMGHVRNYTINDMMARYLRMKGYNVLMPMGWDAFGLPAENAAIDKKVAPAQWTRDNIADMKSQMQPLGLAFDWSREVATCDPDYYKWNQWFFLKLLEKGIAYKKTQVVNWDPVDQTVLANEQVIDGRGWRSGAPVERREIPGYYLAITQYADELLANVADPASPGFLHGWPERVRLMQEHWIGKSAGVRFAFPHEIRDADGTLVGDGLMHVFTTRADTIMGVTFCAVAPEHPLATHAAASDPDLAAFIETCKAGGTTEAELATKDKEGRPTGLFVKHPLSGAPVPVWVGNYVLMGYGDGAVMGVPAHDERDFAFAKKYGIDILQVVHVDGEHFSYDHWQDWYADKQRGVTINSGNLSGLSYPVAVDAVAAALAAQGLGDKKTTWRLRDWGISRQRYWGTPIPIIHCTGSGPGSDNPGCGDVPVPEQDLPVLLPEDLIPDGSGNPLNKSAAFLNVACPKCGAPAKRETDTMDTFVDSSWYYMRYCCPDSDAAMVDSRNDYWMPMDQYIGGIEHAVLHLLYARFWTKAMRDCGLVKFDEPFTKLFTQGMLLNESYYREDASGKKRWFYPSEVEVQFDDKGHPVGAIAREDGQPVQLGGIEKMSKSKNNVVEPRDIIAKFGADTARLFTMFAGPPDQSAAWSDSGAEGSFRYLRRLWAFATKQREAVQAAGTDFADASRAAIDLRRDVHLLLRQVSHDYDRLQYNTVVSGAMKLLNALESAALADTAADRAALREGLGILLRALYPAAPHIAHALWQDLGYAAAHGDLLDAPWPAVDEQALVQDEIELVLQVNGKLRGALKVPASADRAAIEAAALASPELAKFAEGRTPKKVVVVPGRLVNVVV.

Positions 49–59 match the 'HIGH' region motif; sequence PYPSGKLHMGH. The short motif at 654–658 is the 'KMSKS' region element; the sequence is KMSKS. Residue Lys-657 participates in ATP binding.

It belongs to the class-I aminoacyl-tRNA synthetase family.

The protein resides in the cytoplasm. The enzyme catalyses tRNA(Leu) + L-leucine + ATP = L-leucyl-tRNA(Leu) + AMP + diphosphate. This is Leucine--tRNA ligase from Methylibium petroleiphilum (strain ATCC BAA-1232 / LMG 22953 / PM1).